The sequence spans 519 residues: ATP synthase subunit alpha (519 aa).

174 to 181 serves as a coordination point for ATP; sequence GDRQTGKT.

The protein belongs to the ATPase alpha/beta chains family. F-type ATPases have 2 components, CF(1) - the catalytic core - and CF(0) - the membrane proton channel. CF(1) has five subunits: alpha(3), beta(3), gamma(1), delta(1), epsilon(1). CF(0) has three main subunits: a(1), b(2) and c(9-12). The alpha and beta chains form an alternating ring which encloses part of the gamma chain. CF(1) is attached to CF(0) by a central stalk formed by the gamma and epsilon chains, while a peripheral stalk is formed by the delta and b chains.

The protein localises to the cell inner membrane. The catalysed reaction is ATP + H2O + 4 H(+)(in) = ADP + phosphate + 5 H(+)(out). Produces ATP from ADP in the presence of a proton gradient across the membrane. The alpha chain is a regulatory subunit. This chain is ATP synthase subunit alpha, found in Paracidovorax citrulli (strain AAC00-1) (Acidovorax citrulli).